We begin with the raw amino-acid sequence, 766 residues long: LPS-assembly protein LptD (766 aa).

The first 18 residues, 1–18 (MQIRYFLALSLLPNIVLA), serve as a signal peptide directing secretion.

The protein belongs to the LptD family. In terms of assembly, component of the lipopolysaccharide transport and assembly complex. Interacts with LptE and LptA.

Its subcellular location is the cell outer membrane. Together with LptE, is involved in the assembly of lipopolysaccharide (LPS) at the surface of the outer membrane. This chain is LPS-assembly protein LptD, found in Shewanella frigidimarina (strain NCIMB 400).